Reading from the N-terminus, the 997-residue chain is Glutamate [NMDA] receptor subunit 1 (997 aa).

The N-terminal stretch at 1–26 (MAMAEFVFCRPLFGLAIVLLVAPIDA) is a signal peptide. The Extracellular portion of the chain corresponds to 27–573 (AQRHTASDNP…TLVSFLQPFS (547 aa)). 7 N-linked (GlcNAc...) asparagine glycosylation sites follow: Asn-258, Asn-314, Asn-345, Asn-397, Asn-454, Asn-481, and Asn-501. Glycine is bound by residues 530-532 (PLT) and Arg-537. Residues 574–594 (NTLWILVMVSVHVVALVLYLL) traverse the membrane as a helical segment. Residues 595–651 (DRFSPFGRFKLSHSDSNEEKALNLSSAVWFAWGVLLNSGIGEGTPRSFSARVLGMVW) are Cytoplasmic-facing. Residues 652-672 (AGFAMIIVASYTANLAAFLVL) traverse the membrane as a helical segment. The Extracellular segment spans residues 673–831 (ERPKTKLSGI…KTPNTLGLKN (159 aa)). An N-linked (GlcNAc...) asparagine glycan is attached at Asn-693. Positions 703 and 747 each coordinate glycine. Residues 832-852 (MAGVFILVGVGIAGGVGLIII) form a helical membrane-spanning segment. Residues 853–997 (EVIYKKHQVK…YTSDVSHLVV (145 aa)) lie on the Cytoplasmic side of the membrane. A disordered region spans residues 970 to 997 (LGKTRPQQSVLPPRYSPGYTSDVSHLVV). Over residues 987–997 (GYTSDVSHLVV) the composition is skewed to polar residues.

Belongs to the glutamate-gated ion channel (TC 1.A.10.1) family. Forms a heteromeric NMDA channel with Nmdar2. In terms of tissue distribution, highly expressed in adult heads: in the brain and ring gland. Low expression throughout the entire brain is also seen. Higher expression levels were observed in some scattered cell bodies and part of their fibers, including those from several pairs of DPM (dorsal-posterior-medial) neurons surrounding the calyx, DAL (dorsal-anterior-lateral) and DPL (dorsal-posterior-lateral) neurons in the lateral protocerebrum (LP), VAL (ventral-anterior-lateral) neurons in the anterior protocerebrum, and two pairs of VP (ventral-posterior) neurons in the posterior protocerebrum. Many cell bodies in the optic lobes show preferential expression. Punctuate expression is notably detected in many brain regions including the superior medial protocerebrum. Weakly expressed in the antennal lobes and central complex.

The protein localises to the cell membrane. It localises to the postsynaptic cell membrane. Its subcellular location is the postsynaptic density. Functionally, NMDA receptor subtype of glutamate-gated ion channels with high calcium permeability and voltage-dependent sensitivity to magnesium. Mediated by glycine. This protein plays a key role in synaptic plasticity, synaptogenesis, excitotoxicity, memory acquisition and learning. It mediates neuronal functions in glutamate neurotransmission. Is involved in the cell surface targeting of NMDA receptors. Plays a role in associative learning and in long-term memory consolidation. This chain is Glutamate [NMDA] receptor subunit 1, found in Drosophila melanogaster (Fruit fly).